A 501-amino-acid polypeptide reads, in one-letter code: Lysine--tRNA ligase (501 aa).

Residues E412 and E419 each coordinate Mg(2+).

The protein belongs to the class-II aminoacyl-tRNA synthetase family. Homodimer. The cofactor is Mg(2+).

It is found in the cytoplasm. The catalysed reaction is tRNA(Lys) + L-lysine + ATP = L-lysyl-tRNA(Lys) + AMP + diphosphate. In Pasteurella multocida (strain Pm70), this protein is Lysine--tRNA ligase (lysS).